The primary structure comprises 576 residues: Proton pump-interactor 3B (576 aa).

The segment at 34 to 63 (SEVTTDEEEDTIFSGGDSSSGLAAEEDSSG) is disordered. Coiled-coil stretches lie at residues 132–155 (RMVI…LRCT) and 205–241 (EKEA…SDKL). The span at 369–381 (RSEKVHKMNREDS) shows a compositional bias: basic and acidic residues. Residues 369-395 (RSEKVHKMNREDSSSNSSEDGNVITDK) form a disordered region. Residues 411 to 467 (KKKEEEIDEEALKERKREEQLEKARLVMERKRKLQEKAAAKAAIRAQKEAEKKLKAI) are a coiled coil. A helical membrane pass occupies residues 555-575 (WVWGLSSAALAVSLVLVVLLL).

Belongs to the plant Proton pump-interactor protein family.

It is found in the cell membrane. The protein localises to the endoplasmic reticulum membrane. Its function is as follows. May regulate plasma membrane ATPase activity. The protein is Proton pump-interactor 3B (PPI3B) of Arabidopsis thaliana (Mouse-ear cress).